The primary structure comprises 543 residues: DM7 family protein GG19680 (543 aa).

The segment covering 415-430 has biased composition (basic and acidic residues); it reads GETQEMDEAHPTKEES. Residues 415 to 443 are disordered; it reads GETQEMDEAHPTKEESKSEEEGEVQSGSQ.

The protein belongs to the DM7 family.

The protein is DM7 family protein GG19680 of Drosophila erecta (Fruit fly).